Reading from the N-terminus, the 331-residue chain is Ketol-acid reductoisomerase (NADP(+)) (331 aa).

In terms of domain architecture, KARI N-terminal Rossmann spans 2 to 182; that stretch reads ARMYYDEDAN…GGTRGGVLET (181 aa). Residues 25–28, serine 51, serine 53, and 83–86 each bind NADP(+); these read YGSQ and DEVQ. Residue histidine 108 is part of the active site. Glycine 134 lines the NADP(+) pocket. The KARI C-terminal knotted domain maps to 183 to 328; it reads TFREETETDL…KDLRAMFSWL (146 aa). Mg(2+)-binding residues include aspartate 191, glutamate 195, glutamate 227, and glutamate 231. Serine 252 contacts substrate.

Belongs to the ketol-acid reductoisomerase family. It depends on Mg(2+) as a cofactor.

The catalysed reaction is (2R)-2,3-dihydroxy-3-methylbutanoate + NADP(+) = (2S)-2-acetolactate + NADPH + H(+). The enzyme catalyses (2R,3R)-2,3-dihydroxy-3-methylpentanoate + NADP(+) = (S)-2-ethyl-2-hydroxy-3-oxobutanoate + NADPH + H(+). It participates in amino-acid biosynthesis; L-isoleucine biosynthesis; L-isoleucine from 2-oxobutanoate: step 2/4. Its pathway is amino-acid biosynthesis; L-valine biosynthesis; L-valine from pyruvate: step 2/4. Involved in the biosynthesis of branched-chain amino acids (BCAA). Catalyzes an alkyl-migration followed by a ketol-acid reduction of (S)-2-acetolactate (S2AL) to yield (R)-2,3-dihydroxy-isovalerate. In the isomerase reaction, S2AL is rearranged via a Mg-dependent methyl migration to produce 3-hydroxy-3-methyl-2-ketobutyrate (HMKB). In the reductase reaction, this 2-ketoacid undergoes a metal-dependent reduction by NADPH to yield (R)-2,3-dihydroxy-isovalerate. This chain is Ketol-acid reductoisomerase (NADP(+)), found in Trichormus variabilis (strain ATCC 29413 / PCC 7937) (Anabaena variabilis).